The chain runs to 356 residues: Cytochrome b translation regulator cbp7 (356 aa).

As to quaternary structure, component of a complex, at least composed of cbp7 and cbp8.

It localises to the mitochondrion. Translation factor for cob1/cytochrome b; plays a role in cob1 mRNA stabilization and required for correct folding of the protein. The polypeptide is Cytochrome b translation regulator cbp7 (Schizosaccharomyces pombe (strain 972 / ATCC 24843) (Fission yeast)).